A 114-amino-acid chain; its full sequence is Early 4 ORF4 protein (114 aa).

The short motif at 66–75 (RAKRRDRRRR) is the Nuclear localization signal element.

Belongs to the adenoviridae E4 ORF4 family. Interacts with host BAZ1A/ACF1, host PPP2R2A/PP2a-B55alpha subunit, and host PPP2R5E/PP2a-B'B56 subunit. May interact with host SRC. May be phosphorylated by host SRC kinase.

It localises to the host nucleus. The protein localises to the host cytoplasm. In terms of biological role, plays a role in viral alternative pre-mRNA splicing. Activates dephosphorylation by protein phosphatase 2A of host SR proteins and converts their splicing properties. When expressed alone ex vivo, induces p53/TP53-independent apoptosis called cytoplasmic death. May mimic nutrient/growth signals to activate the host mTOR pathway. In Homo sapiens (Human), this protein is Early 4 ORF4 protein.